A 230-amino-acid polypeptide reads, in one-letter code: Bidirectional sugar transporter SWEET16 (230 aa).

At 1–3 (MAD) the chain is on the extracellular side. A helical membrane pass occupies residues 4–24 (LSFYVGVIGNVISVLVFLSPV). Positions 6-92 (FYVGVIGNVI…LIFLFFVPKS (87 aa)) constitute a MtN3/slv 1 domain. Residues 25 to 40 (ETFWRIVQRRSTEEYE) lie on the Cytoplasmic side of the membrane. A helical transmembrane segment spans residues 41-61 (CFPYICTLMSSSLWTYYGIVT). Topologically, residues 62 to 69 (PGEYLVST) are extracellular. Residues 70-90 (VNGFGALAESIYVLIFLFFVP) form a helical membrane-spanning segment. Over 91-93 (KSR) the chain is Cytoplasmic. The chain crosses the membrane as a helical span at residues 94–114 (FLKTVVVVLALNVCFPVIAIA). Topologically, residues 115 to 128 (GTRTLFGDANSRSS) are extracellular. A helical membrane pass occupies residues 129–149 (SMGFICATLNIIMYGSPLSAI). The MtN3/slv 2 domain maps to 129-212 (SMGFICATLN…LLIYAYYRNA (84 aa)). The Cytoplasmic segment spans residues 150–162 (KTVVTTRSVQFMP). The chain crosses the membrane as a helical span at residues 163–183 (FWLSFFLFLNGAIWGVYALLL). Residues 184–185 (HD) lie on the Extracellular side of the membrane. A helical transmembrane segment spans residues 186-206 (MFLLVPNGMGFFLGIMQLLIY). At 207–230 (AYYRNAEPIVEDEEGLIPNQPLLA) the chain is on the cytoplasmic side.

It belongs to the SWEET sugar transporter family. Forms homooligomers and heterooligomers with SWEET1, SWEET7, SWEET8, SWEET9 and SWEET17. Mostly expressed in the cortex of mature roots, and, to a lower extent, in aerial organs such as leaves, stems, and flowers. Mainly present in vascular parenchyma cells, especially in the petiole vasculature, flower stalks and at the base of individual, not fully developed flowers.

Its subcellular location is the vacuole membrane. Mediates both low-affinity uptake and efflux of sugar across the vacuolar membrane. Regulates sugars homeostasis in leaves and roots by exporting/importing them through the tonoplast regarding metabolic demand. Acts as a vacuolar hexose transporter, such as glucose (Glc), fructose (Fru), and sucrose (Suc). The polypeptide is Bidirectional sugar transporter SWEET16 (Arabidopsis thaliana (Mouse-ear cress)).